We begin with the raw amino-acid sequence, 968 residues long: Sorting nexin-13 (968 aa).

The 188-residue stretch at 97 to 284 folds into the PXA domain; sequence ANIIDEPLQQ…YVIWMIRDSN (188 aa). The RGS domain maps to 373 to 496; that stretch reads PLDSILVDNV…RKVYELMLRD (124 aa). Residues 570–691 enclose the PX domain; that stretch reads YADYDPYAVA…DFLENKAYSK (122 aa). A 1,2-diacyl-sn-glycero-3-phospho-(1D-myo-inositol-3-phosphate) contacts are provided by Arg-612, Ser-614, Lys-639, and Arg-653.

It belongs to the sorting nexin family.

The protein localises to the early endosome membrane. In terms of biological role, may be involved in several stages of intracellular trafficking. May play a role in endosome homeostasis. Acts as a GAP for Galphas. The protein is Sorting nexin-13 (SNX13) of Homo sapiens (Human).